Here is a 430-residue protein sequence, read N- to C-terminus: Trigger factor (430 aa).

Residues 163–248 (GDTVVFDFAG…IHEIKAQELP (86 aa)) enclose the PPIase FKBP-type domain.

The protein belongs to the FKBP-type PPIase family. Tig subfamily.

It is found in the cytoplasm. It carries out the reaction [protein]-peptidylproline (omega=180) = [protein]-peptidylproline (omega=0). In terms of biological role, involved in protein export. Acts as a chaperone by maintaining the newly synthesized protein in an open conformation. Functions as a peptidyl-prolyl cis-trans isomerase. The sequence is that of Trigger factor from Exiguobacterium sibiricum (strain DSM 17290 / CCUG 55495 / CIP 109462 / JCM 13490 / 255-15).